The sequence spans 128 residues: Large ribosomal subunit protein bL20c (128 aa).

Belongs to the bacterial ribosomal protein bL20 family.

The protein resides in the plastid. Its subcellular location is the chloroplast. Binds directly to 23S ribosomal RNA and is necessary for the in vitro assembly process of the 50S ribosomal subunit. It is not involved in the protein synthesizing functions of that subunit. The polypeptide is Large ribosomal subunit protein bL20c (Trachelium caeruleum (Blue throatwort)).